The following is a 197-amino-acid chain: Dephospho-CoA kinase (197 aa).

One can recognise a DPCK domain in the interval 3 to 197; that stretch reads ILGLTGSIAM…TGCLVGQGSR (195 aa). 11–16 is a binding site for ATP; the sequence is AMGKST.

It belongs to the CoaE family.

The protein resides in the cytoplasm. It carries out the reaction 3'-dephospho-CoA + ATP = ADP + CoA + H(+). It functions in the pathway cofactor biosynthesis; coenzyme A biosynthesis; CoA from (R)-pantothenate: step 5/5. Functionally, catalyzes the phosphorylation of the 3'-hydroxyl group of dephosphocoenzyme A to form coenzyme A. This is Dephospho-CoA kinase from Zymomonas mobilis subsp. mobilis (strain ATCC 31821 / ZM4 / CP4).